The sequence spans 182 residues: ATP synthase subunit delta (182 aa).

Belongs to the ATPase delta chain family. In terms of assembly, F-type ATPases have 2 components, F(1) - the catalytic core - and F(0) - the membrane proton channel. F(1) has five subunits: alpha(3), beta(3), gamma(1), delta(1), epsilon(1). F(0) has three main subunits: a(1), b(2) and c(10-14). The alpha and beta chains form an alternating ring which encloses part of the gamma chain. F(1) is attached to F(0) by a central stalk formed by the gamma and epsilon chains, while a peripheral stalk is formed by the delta and b chains.

It is found in the cell membrane. In terms of biological role, f(1)F(0) ATP synthase produces ATP from ADP in the presence of a proton or sodium gradient. F-type ATPases consist of two structural domains, F(1) containing the extramembraneous catalytic core and F(0) containing the membrane proton channel, linked together by a central stalk and a peripheral stalk. During catalysis, ATP synthesis in the catalytic domain of F(1) is coupled via a rotary mechanism of the central stalk subunits to proton translocation. Functionally, this protein is part of the stalk that links CF(0) to CF(1). It either transmits conformational changes from CF(0) to CF(1) or is implicated in proton conduction. This Lactobacillus gasseri (strain ATCC 33323 / DSM 20243 / BCRC 14619 / CIP 102991 / JCM 1131 / KCTC 3163 / NCIMB 11718 / NCTC 13722 / AM63) protein is ATP synthase subunit delta.